The following is a 312-amino-acid chain: Signal peptidase I (312 aa).

The helical transmembrane segment at 7-27 (IFLLTSTFFTGILWIIDHILL) threads the bilayer. Residues 28–63 (IKNYFYNKKKTKNNNTILINKVILENKKCFFRSLSS) are Cytoplasmic-facing. The helical transmembrane segment at 64–84 (LFPTFFIVFIIRSFIYEPFQI) threads the bilayer. Residues 85–312 (PSGSMMPTLL…IRIKRIGNIY (228 aa)) lie on the Extracellular side of the membrane. Residues serine 88 and lysine 142 contribute to the active site.

It belongs to the peptidase S26 family.

It is found in the cell membrane. It carries out the reaction Cleavage of hydrophobic, N-terminal signal or leader sequences from secreted and periplasmic proteins.. The chain is Signal peptidase I (lepB) from Buchnera aphidicola subsp. Schizaphis graminum (strain Sg).